A 902-amino-acid polypeptide reads, in one-letter code: Nitrate reductase [NADPH] (902 aa).

Cys-182 lines the Mo-molybdopterin pocket. Positions Leu-537–Ser-612 constitute a Cytochrome b5 heme-binding domain. Residues His-572 and His-595 each contribute to the heme site. In terms of domain architecture, FAD-binding FR-type spans Arg-637–Tyr-751. FAD is bound by residues Arg-689–Thr-692, Leu-708–Tyr-712, Phe-713, Leu-725–Ser-727, and Thr-778. An NADP(+)-binding site is contributed by Cys-872–Met-879.

Belongs to the nitrate reductase family. In terms of assembly, homodimer. It depends on FAD as a cofactor. The cofactor is heme. Mo-molybdopterin serves as cofactor.

It catalyses the reaction nitrite + NADP(+) + H2O = nitrate + NADPH + H(+). Its function is as follows. Nitrate reductase is a key enzyme involved in the first step of nitrate assimilation in plants, fungi and bacteria. This is Nitrate reductase [NADPH] (NIAA) from Phytophthora infestans (Potato late blight agent).